A 368-amino-acid chain; its full sequence is uncharacterized protein (368 aa).

The Response regulatory domain occupies 3 to 120; it reads KILLADDERI…QIISSLEEII (118 aa). Aspartate 55 bears the 4-aspartylphosphate mark. Positions 259–361 constitute an HTH araC/xylS-type domain; it reads SKMIRLIADE…GLTPSEFRRK (103 aa). 2 consecutive DNA-binding regions (H-T-H motif) follow at residues 278-299 and 327-351; these read WAAKDMLFMNPDYLGKLFKQET and VSEIAEEIGFGDNPKYFSLVFKKYT.

In terms of processing, phosphorylated by YesM.

The protein localises to the cytoplasm. Member of the two-component regulatory system YesM/YesN. This is an uncharacterized protein from Bacillus subtilis (strain 168).